A 339-amino-acid chain; its full sequence is 4-hydroxy-2-oxovalerate aldolase 3 (339 aa).

One can recognise a Pyruvate carboxyltransferase domain in the interval 7-259 (IRVTDTSLRD…KTGIDFFAIA (253 aa)). Residue 15 to 16 (RD) participates in substrate binding. Mn(2+) is bound at residue D16. H19 (proton acceptor) is an active-site residue. Positions 169 and 198 each coordinate substrate. 2 residues coordinate Mn(2+): H198 and H200. Substrate is bound at residue Y289.

The protein belongs to the 4-hydroxy-2-oxovalerate aldolase family.

The catalysed reaction is (S)-4-hydroxy-2-oxopentanoate = acetaldehyde + pyruvate. This chain is 4-hydroxy-2-oxovalerate aldolase 3, found in Rhodococcus opacus (strain B4).